Reading from the N-terminus, the 392-residue chain is Elongation factor Tu-3 (392 aa).

The region spanning 10 to 206 (KPHLNIGTMG…AVDTYVPMPE (197 aa)) is the tr-type G domain. Positions 19-26 (GHVDHGKT) are G1. 19–26 (GHVDHGKT) lines the GTP pocket. Residue threonine 26 participates in Mg(2+) binding. The segment at 63 to 67 (GITIN) is G2. Positions 84–87 (DMPG) are G3. GTP is bound by residues 84–88 (DMPGH) and 139–142 (NKAD). Positions 139–142 (NKAD) are G4. Residues 176 to 178 (SGL) form a G5 region.

It belongs to the TRAFAC class translation factor GTPase superfamily. Classic translation factor GTPase family. EF-Tu/EF-1A subfamily. Monomer.

It is found in the cytoplasm. The enzyme catalyses GTP + H2O = GDP + phosphate + H(+). Its function is as follows. GTP hydrolase that promotes the GTP-dependent binding of aminoacyl-tRNA to the A-site of ribosomes during protein biosynthesis. The polypeptide is Elongation factor Tu-3 (Streptomyces coelicolor (strain ATCC BAA-471 / A3(2) / M145)).